A 356-amino-acid chain; its full sequence is Histidinol-phosphate aminotransferase 2 (356 aa).

An N6-(pyridoxal phosphate)lysine modification is found at Lys-217.

The protein belongs to the class-II pyridoxal-phosphate-dependent aminotransferase family. Histidinol-phosphate aminotransferase subfamily. In terms of assembly, homodimer. The cofactor is pyridoxal 5'-phosphate.

The catalysed reaction is L-histidinol phosphate + 2-oxoglutarate = 3-(imidazol-4-yl)-2-oxopropyl phosphate + L-glutamate. It functions in the pathway amino-acid biosynthesis; L-histidine biosynthesis; L-histidine from 5-phospho-alpha-D-ribose 1-diphosphate: step 7/9. This Burkholderia pseudomallei (strain 1710b) protein is Histidinol-phosphate aminotransferase 2.